A 392-amino-acid polypeptide reads, in one-letter code: Glyceraldehyde-3-phosphate dehydrogenase A, chloroplastic (392 aa).

The N-terminal 56 residues, 1-56, are a transit peptide targeting the chloroplast; sequence NSSLQVSNKGFSEFSGLRTSSAIPFGRKTNDDLLSVVAFQTSVIGGGNSKRGVVEA. Residues 67–68, Asp91, and Arg136 each bind NADP(+); that span reads RI. Residues 208 to 210, Thr239, Arg254, 267 to 268, and Arg290 contribute to the D-glyceraldehyde 3-phosphate site; these read SCT and TG. Residue Cys209 is the Nucleophile of the active site. NADP(+) is bound at residue Asn372.

The protein belongs to the glyceraldehyde-3-phosphate dehydrogenase family. As to quaternary structure, tetramer of either four A chains (GAPDH 2) or two A and two B chains (GAPDH 1).

The protein resides in the plastid. It is found in the chloroplast. The enzyme catalyses D-glyceraldehyde 3-phosphate + phosphate + NADP(+) = (2R)-3-phospho-glyceroyl phosphate + NADPH + H(+). Its pathway is carbohydrate biosynthesis; Calvin cycle. The chain is Glyceraldehyde-3-phosphate dehydrogenase A, chloroplastic (GAPA) from Nicotiana tabacum (Common tobacco).